The following is a 198-amino-acid chain: Glycerol-3-phosphate acyltransferase (198 aa).

Helical transmembrane passes span 2–22 (YAVL…AYIF), 48–70 (LGYK…AVLI), 75–97 (MGNT…PVFL), 111–131 (VVMT…VTVI), and 154–174 (IFWN…LAIF).

It belongs to the PlsY family. In terms of assembly, probably interacts with PlsX.

The protein resides in the cell membrane. It catalyses the reaction an acyl phosphate + sn-glycerol 3-phosphate = a 1-acyl-sn-glycero-3-phosphate + phosphate. Its pathway is lipid metabolism; phospholipid metabolism. In terms of biological role, catalyzes the transfer of an acyl group from acyl-phosphate (acyl-PO(4)) to glycerol-3-phosphate (G3P) to form lysophosphatidic acid (LPA). This enzyme utilizes acyl-phosphate as fatty acyl donor, but not acyl-CoA or acyl-ACP. In Thermoanaerobacter sp. (strain X514), this protein is Glycerol-3-phosphate acyltransferase.